A 502-amino-acid polypeptide reads, in one-letter code: ATP synthase subunit alpha, sodium ion specific (502 aa).

Residue 169-176 (GDRQTGKT) coordinates ATP.

It belongs to the ATPase alpha/beta chains family. F-type ATPases have 2 components, CF(1) - the catalytic core - and CF(0) - the membrane proton channel. CF(1) has five subunits: alpha(3), beta(3), gamma(1), delta(1), epsilon(1). CF(0) has three main subunits: a, b and c.

It is found in the cell membrane. The enzyme catalyses 4 Na(+)(in) + ATP + H2O = 4 Na(+)(out) + ADP + phosphate + H(+). With respect to regulation, inhibited by nitrate. Produces ATP from ADP in the presence of a sodium ion gradient across the membrane. The alpha chain is a regulatory subunit. The sequence is that of ATP synthase subunit alpha, sodium ion specific from Acetobacterium woodii (strain ATCC 29683 / DSM 1030 / JCM 2381 / KCTC 1655 / WB1).